The sequence spans 508 residues: Methionine--tRNA ligase (508 aa).

The short motif at 12–22 (YYVNDVAHIGH) is the 'HIGH' region element. Positions 295–299 (KISKS) match the 'KMSKS' region motif. Lys-298 is a binding site for ATP.

This sequence belongs to the class-I aminoacyl-tRNA synthetase family. MetG type 2B subfamily. In terms of assembly, monomer.

Its subcellular location is the cytoplasm. It carries out the reaction tRNA(Met) + L-methionine + ATP = L-methionyl-tRNA(Met) + AMP + diphosphate. Functionally, is required not only for elongation of protein synthesis but also for the initiation of all mRNA translation through initiator tRNA(fMet) aminoacylation. The protein is Methionine--tRNA ligase (metG) of Rickettsia prowazekii (strain Madrid E).